We begin with the raw amino-acid sequence, 330 residues long: DNA repair and recombination protein RadA (330 aa).

124-131 is an ATP binding site; that stretch reads GEFGSGKT.

This sequence belongs to the eukaryotic RecA-like protein family.

Its function is as follows. Involved in DNA repair and in homologous recombination. Binds and assemble on single-stranded DNA to form a nucleoprotein filament. Hydrolyzes ATP in a ssDNA-dependent manner and promotes DNA strand exchange between homologous DNA molecules. In Pyrobaculum neutrophilum (strain DSM 2338 / JCM 9278 / NBRC 100436 / V24Sta) (Thermoproteus neutrophilus), this protein is DNA repair and recombination protein RadA.